The primary structure comprises 335 residues: Aliphatic sulfonates import ATP-binding protein SsuB (335 aa).

The tract at residues 48 to 71 is disordered; that stretch reads PFASGGAFGRAPRDDDDDRRGAGD. The region spanning 74-293 is the ABC transporter domain; the sequence is VRLTRVSKRY…ARASAAFAEL (220 aa). ATP is bound at residue 106 to 113; the sequence is GRSGCGKS.

The protein belongs to the ABC transporter superfamily. Aliphatic sulfonates importer (TC 3.A.1.17.2) family. The complex is composed of two ATP-binding proteins (SsuB), two transmembrane proteins (SsuC) and a solute-binding protein (SsuA).

It is found in the cell inner membrane. The catalysed reaction is ATP + H2O + aliphatic sulfonate-[sulfonate-binding protein]Side 1 = ADP + phosphate + aliphatic sulfonateSide 2 + [sulfonate-binding protein]Side 1.. Part of the ABC transporter complex SsuABC involved in aliphatic sulfonates import. Responsible for energy coupling to the transport system. In Burkholderia thailandensis (strain ATCC 700388 / DSM 13276 / CCUG 48851 / CIP 106301 / E264), this protein is Aliphatic sulfonates import ATP-binding protein SsuB.